The following is a 159-amino-acid chain: Siroheme decarboxylase beta subunit (159 aa).

Substrate is bound at residue 152-157; the sequence is KTSMTY.

It belongs to the Ahb/Nir family. As to quaternary structure, forms a heterodimer composed of AhbA and AhbB.

The enzyme catalyses siroheme + 2 H(+) = 12,18-didecarboxysiroheme + 2 CO2. It participates in porphyrin-containing compound metabolism; protoheme biosynthesis. Its function is as follows. Involved in siroheme-dependent heme b biosynthesis. Catalyzes the decarboxylation of siroheme into didecarboxysiroheme. Siroheme is decarboxylated to monodecarboxysiroheme, which is in turn decarboxylated to didecarboxysiroheme. This chain is Siroheme decarboxylase beta subunit, found in Desulfovibrio desulfuricans (strain ATCC 27774 / DSM 6949 / MB).